The sequence spans 286 residues: Beta-glucanase (286 aa).

The signal sequence occupies residues 1-30 (MCTMPLMKLKKMMRRTAFLLSVLIGCSMLG). Residues 48-286 (FDYSGLPDPE…DYVRVYRWVE (239 aa)) form the GH16 domain. Residue Glu158 is the Nucleophile of the active site. The Proton donor role is filled by Glu163.

Belongs to the glycosyl hydrolase 16 family.

The catalysed reaction is Hydrolysis of (1-&gt;4)-beta-D-glucosidic linkages in beta-D-glucans containing (1-&gt;3)- and (1-&gt;4)-bonds.. Shows activity on lichenan, beta-glucan and laminarin but not on CMC cellulose or xylan. The sequence is that of Beta-glucanase (bglA) from Rhodothermus marinus (Rhodothermus obamensis).